We begin with the raw amino-acid sequence, 413 residues long: Putative adhesin P1-like protein MPN_144 (413 aa).

Polar residues-rich tracts occupy residues 1-13 (MGQQ…SAGN), 25-54 (SGDS…NLTP), and 355-376 (SFGT…VFGT). Disordered stretches follow at residues 1 to 60 (MGQQ…DWPN) and 355 to 413 (SFGT…VSGH). The span at 385–399 (LSGGGAGGGSSGSGQ) shows a compositional bias: gly residues.

This sequence belongs to the adhesin P1 family.

This chain is Putative adhesin P1-like protein MPN_144, found in Mycoplasma pneumoniae (strain ATCC 29342 / M129 / Subtype 1) (Mycoplasmoides pneumoniae).